Reading from the N-terminus, the 484-residue chain is Glutamate--tRNA ligase (484 aa).

The short motif at 9-19 is the 'HIGH' region element; that stretch reads PSPTGNLHIGT. Positions 98, 100, 125, and 127 each coordinate Zn(2+). A 'KMSKS' region motif is present at residues 250 to 254; it reads KLSKR. K253 contacts ATP.

This sequence belongs to the class-I aminoacyl-tRNA synthetase family. Glutamate--tRNA ligase type 1 subfamily. In terms of assembly, monomer. Zn(2+) is required as a cofactor.

The protein localises to the cytoplasm. The catalysed reaction is tRNA(Glu) + L-glutamate + ATP = L-glutamyl-tRNA(Glu) + AMP + diphosphate. Its function is as follows. Catalyzes the attachment of glutamate to tRNA(Glu) in a two-step reaction: glutamate is first activated by ATP to form Glu-AMP and then transferred to the acceptor end of tRNA(Glu). This is Glutamate--tRNA ligase from Crocosphaera subtropica (strain ATCC 51142 / BH68) (Cyanothece sp. (strain ATCC 51142)).